A 491-amino-acid polypeptide reads, in one-letter code: (R)-citramalate synthase CimA (491 aa).

Residues 3–254 (VRIFDTTLRD…DTKIKMEKLY (252 aa)) enclose the Pyruvate carboxyltransferase domain.

This sequence belongs to the alpha-IPM synthase/homocitrate synthase family. Homodimer.

The catalysed reaction is pyruvate + acetyl-CoA + H2O = (3R)-citramalate + CoA + H(+). Its pathway is amino-acid biosynthesis; L-isoleucine biosynthesis; 2-oxobutanoate from pyruvate: step 1/3. Its function is as follows. Catalyzes the condensation of pyruvate and acetyl-coenzyme A to form (R)-citramalate. This Methanocaldococcus jannaschii (strain ATCC 43067 / DSM 2661 / JAL-1 / JCM 10045 / NBRC 100440) (Methanococcus jannaschii) protein is (R)-citramalate synthase CimA (cimA).